A 92-amino-acid chain; its full sequence is Small ribosomal subunit protein uS19 (92 aa).

The protein belongs to the universal ribosomal protein uS19 family.

Functionally, protein S19 forms a complex with S13 that binds strongly to the 16S ribosomal RNA. The protein is Small ribosomal subunit protein uS19 of Nostoc sp. (strain PCC 7120 / SAG 25.82 / UTEX 2576).